A 457-amino-acid polypeptide reads, in one-letter code: tRNA modification GTPase MnmE (457 aa).

Residues R24, E81, and K124 each contribute to the (6S)-5-formyl-5,6,7,8-tetrahydrofolate site. The TrmE-type G domain occupies 220 to 379 (GIQLVLAGAP…LKQKILHVVG (160 aa)). N230 provides a ligand contact to K(+). GTP is bound by residues 230–235 (NVGKSS), 249–255 (TPIAGTT), and 274–277 (DTAG). S234 is a Mg(2+) binding site. 3 residues coordinate K(+): T249, I251, and T254. A Mg(2+)-binding site is contributed by T255. A (6S)-5-formyl-5,6,7,8-tetrahydrofolate-binding site is contributed by K457.

Belongs to the TRAFAC class TrmE-Era-EngA-EngB-Septin-like GTPase superfamily. TrmE GTPase family. As to quaternary structure, homodimer. Heterotetramer of two MnmE and two MnmG subunits. K(+) is required as a cofactor.

The protein resides in the cytoplasm. Its function is as follows. Exhibits a very high intrinsic GTPase hydrolysis rate. Involved in the addition of a carboxymethylaminomethyl (cmnm) group at the wobble position (U34) of certain tRNAs, forming tRNA-cmnm(5)s(2)U34. This Polynucleobacter asymbioticus (strain DSM 18221 / CIP 109841 / QLW-P1DMWA-1) (Polynucleobacter necessarius subsp. asymbioticus) protein is tRNA modification GTPase MnmE.